The following is a 141-amino-acid chain: Nucleoside diphosphate kinase (141 aa).

ATP contacts are provided by lysine 11, phenylalanine 59, arginine 87, threonine 93, arginine 104, and asparagine 114. The active-site Pros-phosphohistidine intermediate is histidine 117.

Belongs to the NDK family. Homotetramer. Mg(2+) is required as a cofactor.

It is found in the cytoplasm. It carries out the reaction a 2'-deoxyribonucleoside 5'-diphosphate + ATP = a 2'-deoxyribonucleoside 5'-triphosphate + ADP. It catalyses the reaction a ribonucleoside 5'-diphosphate + ATP = a ribonucleoside 5'-triphosphate + ADP. Functionally, major role in the synthesis of nucleoside triphosphates other than ATP. The ATP gamma phosphate is transferred to the NDP beta phosphate via a ping-pong mechanism, using a phosphorylated active-site intermediate. This chain is Nucleoside diphosphate kinase, found in Polynucleobacter necessarius subsp. necessarius (strain STIR1).